The sequence spans 923 residues: DNA mismatch repair protein MutS (923 aa).

ATP is bound at residue 671-678 (GPNMAGKS).

Belongs to the DNA mismatch repair MutS family.

Functionally, this protein is involved in the repair of mismatches in DNA. It is possible that it carries out the mismatch recognition step. This protein has a weak ATPase activity. The sequence is that of DNA mismatch repair protein MutS from Rhodopseudomonas palustris (strain BisB5).